The primary structure comprises 253 residues: Blue-light photoreceptor (253 aa).

The PAS domain occupies 6–79 (KFDVILKALN…AKIRHAINEK (74 aa)). At Cys-56 the chain carries S-4a-FMN cysteine. In terms of domain architecture, PAC spans 80–133 (STANVLLKNYRKNGTSFMNELTIEPIYDDNDHLYFVGIQKDVTTEHNYQLELEK). In terms of domain architecture, STAS spans 142-253 (STPIVPIKEN…STIKEALQFY (112 aa)).

Post-translationally, FMN binds covalently to cysteine after exposure to blue light and this bond is spontaneously broken in the dark.

In terms of biological role, exhibits the same spectroscopical features and blue-light induced photochemistry as plants phototropins, with the reversible formation of a blue-shifted photoproduct, assigned to an FMN-cysteine thiol adduct. Positive regulator in the activation of the general stress transcription factor sigma-B. This is Blue-light photoreceptor from Listeria innocua serovar 6a (strain ATCC BAA-680 / CLIP 11262).